The following is a 371-amino-acid chain: F-box protein At2g26850 (371 aa).

Residues 59–105 enclose the F-box domain; it reads KMSILDLPDLPLDCILELLPPSELCTMARVCSSLRERCVSDHLWEKH.

This is F-box protein At2g26850 from Arabidopsis thaliana (Mouse-ear cress).